Reading from the N-terminus, the 269-residue chain is Elongation factor Ts (269 aa).

Residues 76 to 79 are involved in Mg(2+) ion dislocation from EF-Tu; that stretch reads TDFV.

This sequence belongs to the EF-Ts family.

The protein localises to the cytoplasm. Associates with the EF-Tu.GDP complex and induces the exchange of GDP to GTP. It remains bound to the aminoacyl-tRNA.EF-Tu.GTP complex up to the GTP hydrolysis stage on the ribosome. The protein is Elongation factor Ts of Deinococcus geothermalis (strain DSM 11300 / CIP 105573 / AG-3a).